Reading from the N-terminus, the 297-residue chain is Bifunctional protein FolD 2 (297 aa).

NADP(+) contacts are provided by residues 172 to 174, Thr-199, and Val-240; that span reads GRG.

It belongs to the tetrahydrofolate dehydrogenase/cyclohydrolase family. In terms of assembly, homodimer.

The enzyme catalyses (6R)-5,10-methylene-5,6,7,8-tetrahydrofolate + NADP(+) = (6R)-5,10-methenyltetrahydrofolate + NADPH. It carries out the reaction (6R)-5,10-methenyltetrahydrofolate + H2O = (6R)-10-formyltetrahydrofolate + H(+). The protein operates within one-carbon metabolism; tetrahydrofolate interconversion. Functionally, catalyzes the oxidation of 5,10-methylenetetrahydrofolate to 5,10-methenyltetrahydrofolate and then the hydrolysis of 5,10-methenyltetrahydrofolate to 10-formyltetrahydrofolate. The protein is Bifunctional protein FolD 2 of Paenarthrobacter aurescens (strain TC1).